Reading from the N-terminus, the 132-residue chain is Two-component response regulator ORR42 (132 aa).

The region spanning 11–125 (RALLVEDIKV…LEHILQETRS (115 aa)) is the Response regulatory domain. 4-aspartylphosphate is present on Asp61.

The protein belongs to the ARR family. Type-C subfamily. Post-translationally, two-component system major event consists of a His-to-Asp phosphorelay between a sensor histidine kinase (HK) and a response regulator (RR). In plants, the His-to-Asp phosphorelay involves an additional intermediate named Histidine-containing phosphotransfer protein (HPt). This multistep phosphorelay consists of a His-Asp-His-Asp sequential transfer of a phosphate group between first a His and an Asp of the HK protein, followed by the transfer to a conserved His of the HPt protein and finally the transfer to an Asp in the receiver domain of the RR protein.

Functions as a response regulator involved in His-to-Asp phosphorelay signal transduction system. Phosphorylation of the Asp residue in the receiver domain activates the ability of the protein to promote the transcription of target genes. May directly activate some type-A response regulators in response to cytokinins. This chain is Two-component response regulator ORR42, found in Oryza sativa subsp. japonica (Rice).